The chain runs to 436 residues: Putative ankyrin repeat protein FPV245 (436 aa).

ANK repeat units follow at residues 1–30 (MSVD…CINI), 34–63 (ETTT…QVNH), 67–96 (KIPN…DTSI), 98–119 (PVPC…KVNT), 123–152 (KSKT…DVNI), 156–185 (NGCY…YANV), 189–218 (YGNS…NISN), 222–252 (NGVT…DTDV), 253–283 (DGYT…DISI), and 287–317 (NGRN…LINE).

The polypeptide is Putative ankyrin repeat protein FPV245 (Vertebrata (FPV)).